The chain runs to 615 residues: Probable methylmalonyl-CoA mutase small subunit (615 aa).

The protein belongs to the methylmalonyl-CoA mutase family. In terms of assembly, heterodimer of an alpha and a beta chain. Requires adenosylcob(III)alamin as cofactor.

The catalysed reaction is (R)-methylmalonyl-CoA = succinyl-CoA. It functions in the pathway metabolic intermediate metabolism; propanoyl-CoA degradation; succinyl-CoA from propanoyl-CoA: step 3/3. Functionally, catalyzes the isomerization of succinyl-CoA to methylmalonyl-CoA during synthesis of propionate from tricarboxylic acid-cycle intermediates. This is Probable methylmalonyl-CoA mutase small subunit (mutA) from Mycobacterium bovis (strain ATCC BAA-935 / AF2122/97).